Here is a 284-residue protein sequence, read N- to C-terminus: 2-dehydro-3-deoxyphosphooctonate aldolase (284 aa).

Belongs to the KdsA family.

The protein resides in the cytoplasm. It carries out the reaction D-arabinose 5-phosphate + phosphoenolpyruvate + H2O = 3-deoxy-alpha-D-manno-2-octulosonate-8-phosphate + phosphate. Its pathway is carbohydrate biosynthesis; 3-deoxy-D-manno-octulosonate biosynthesis; 3-deoxy-D-manno-octulosonate from D-ribulose 5-phosphate: step 2/3. It participates in bacterial outer membrane biogenesis; lipopolysaccharide biosynthesis. This Histophilus somni (strain 129Pt) (Haemophilus somnus) protein is 2-dehydro-3-deoxyphosphooctonate aldolase.